Reading from the N-terminus, the 401-residue chain is Calreticulin (401 aa).

The N-terminal stretch at 1–18 (MRKELWLGLLLSSQAVLS) is a signal peptide. C103 and C134 form a disulfide bridge. Y107, K109, Y125, and D132 together coordinate an alpha-D-glucoside. A run of 7 repeats spans residues 187-198 (KESGTLEEDWEI), 206-217 (DPEDKKPADWVD), 223-234 (DPEDKKPEDWDK), 241-252 (DPDATQPDDWDE), 256-266 (GKWEAPMISNP), 270-280 (GEWKAKKIPNP), and 284-294 (GVWKPRDIPNP). The 4 X approximate repeats stretch occupies residues 187–252 (KESGTLEEDW…DATQPDDWDE (66 aa)). Basic and acidic residues-rich tracts occupy residues 199 to 214 (LKPK…KPAD) and 224 to 236 (PEDK…DKEP). The interval 199 to 263 (LKPKTIPDPE…EDGKWEAPMI (65 aa)) is disordered. A compositionally biased stretch (acidic residues) spans 246–256 (QPDDWDEEEDG). The tract at residues 256-294 (GKWEAPMISNPKYKGEWKAKKIPNPAYKGVWKPRDIPNP) is 3 X approximate repeats. An an alpha-D-glucoside-binding site is contributed by D314. A disordered region spans residues 341–401 (DQTNGATKDA…EEEDDKKDEL (61 aa)). The span at 348–381 (KDAEKKAFDSAEADKRKKEEDERKKQEEEEKKTA) shows a compositional bias: basic and acidic residues. Positions 382-401 (EEDEDDDDEEEEEDDKKDEL) are enriched in acidic residues. Residues 398–401 (KDEL) carry the Prevents secretion from ER motif.

It belongs to the calreticulin family.

Its subcellular location is the endoplasmic reticulum lumen. Molecular calcium-binding chaperone promoting folding, oligomeric assembly and quality control in the ER via the calreticulin/calnexin cycle. This lectin may interact transiently with almost all of the monoglucosylated glycoproteins that are synthesized in the ER. The chain is Calreticulin from Euglena gracilis.